Reading from the N-terminus, the 382-residue chain is Gap junction alpha-1 protein (382 aa).

At 2–23 (GDWSALGKLLDKVQAYSTAGGK) the chain is on the cytoplasmic side. S5 carries the post-translational modification Phosphoserine. Residues 24–44 (VWLSVLFIFRILLLGTAVESA) form a helical membrane-spanning segment. Topologically, residues 45-76 (WGDEQSAFRCNTQQPGCENVCYDKSFPISHVR) are extracellular. Cystine bridges form between C54–C192 and C187–C198. The helical transmembrane segment at 77–97 (FWVLQIIFVSVPTLLYLAHVF) threads the bilayer. Residues 98–155 (YVMRKEEKLNKKEEELKVAQTDGVNVEMHLKQIEIKKFKYGIEEHGKVKMRGGLLRTY) lie on the Cytoplasmic side of the membrane. K144 is covalently cross-linked (Glycyl lysine isopeptide (Lys-Gly) (interchain with G-Cter in SUMO)). The chain crosses the membrane as a helical span at residues 156-176 (IISILFKSVFEVAFLLIQWYI). At 177–207 (YGFSLSAVYTCKRDPCPHQVDCFLSRPTEKT) the chain is on the extracellular side. The chain crosses the membrane as a helical span at residues 208-228 (IFIIFMLVVSLVSLALNIIEL). Residues 229 to 382 (FYVFFKGVKD…SRPRPDDLEI (154 aa)) lie on the Cytoplasmic side of the membrane. K237 participates in a covalent cross-link: Glycyl lysine isopeptide (Lys-Gly) (interchain with G-Cter in SUMO). Positions 244–382 (SDPYHATTGP…SRPRPDDLEI (139 aa)) are interaction with NOV. Phosphotyrosine is present on Y247. A phosphoserine mark is found at S255, S257, and S262. The interaction with UBQLN4 stretch occupies residues 264–382 (KYAYFNGCSS…SRPRPDDLEI (119 aa)). C271 bears the S-nitrosocysteine mark. A Phosphothreonine modification is found at T275. Residues S306, S314, and S325 each carry the phosphoserine modification. Residues 317–332 (QNRMGQAGSTISNSHA) show a composition bias toward polar residues. The disordered stretch occupies residues 317 to 382 (QNRMGQAGST…SRPRPDDLEI (66 aa)). Residue T326 is modified to Phosphothreonine. 3 positions are modified to phosphoserine: S328, S330, and S365. Over residues 362-374 (RPSSRASSRASSR) the composition is skewed to low complexity. A Phosphoserine; by PKC/PRKCG and PKC/PRKCD modification is found at S368. Residues S369 and S373 each carry the phosphoserine modification.

The protein belongs to the connexin family. Alpha-type (group II) subfamily. In terms of assembly, a connexon is composed of a hexamer of connexins. Interacts with SGSM3. Interacts with RIC1/CIP150. Interacts with CNST and CSNK1D. Interacts (via C-terminus) with TJP1. Interacts (via C-terminus) with SRC (via SH3 domain). Interacts (not ubiquitinated) with UBQLN4 (via UBA domain). Interacts with NOV. Interacts with TMEM65. Interacts with ANK3/ANKG and PKP2. Post-translationally, contains at least one intramolecular disulfide bond. Phosphorylation at Ser-325, Ser-328 and Ser-330 by CK1 modulates gap junction assembly. Phosphorylated at Ser-368 by PRKCG; phosphorylation induces disassembly of gap junction plaques and inhibition of gap junction activity. Phosphorylation at Ser-368 by PRKCD triggers its internalization into small vesicles leading to proteasome-mediated degradation. In terms of processing, sumoylated with SUMO1, SUMO2 and SUMO3, which may regulate the level of functional Cx43 gap junctions at the plasma membrane. May be desumoylated by SENP1 or SENP2. Post-translationally, S-nitrosylation at Cys-271 is enriched at the muscle endothelial gap junction in arteries, it augments channel permeability and may regulate of smooth muscle cell to endothelial cell communication. Acetylated in the developing cortex; leading to delocalization from the cell membrane. Detected in ventricle and atrium (at protein level).

Its subcellular location is the cell membrane. The protein localises to the cell junction. It localises to the gap junction. It is found in the endoplasmic reticulum. Functionally, gap junction protein that acts as a regulator of bladder capacity. A gap junction consists of a cluster of closely packed pairs of transmembrane channels, the connexons, through which materials of low MW diffuse from one cell to a neighboring cell. Negative regulator of bladder functional capacity: acts by enhancing intercellular electrical and chemical transmission, thus sensitizing bladder muscles to cholinergic neural stimuli and causing them to contract. May play a role in cell growth inhibition through the regulation of NOV expression and localization. Plays an essential role in gap junction communication in the ventricles. The sequence is that of Gap junction alpha-1 protein (Gja1) from Rattus norvegicus (Rat).